Reading from the N-terminus, the 163-residue chain is Putative H/ACA ribonucleoprotein complex subunit 2-like protein (163 aa).

Belongs to the eukaryotic ribosomal protein eL8 family. As to quaternary structure, component of the small nucleolar ribonucleoprotein particle containing H/ACA-type snoRNAs (H/ACA snoRNPs).

Its subcellular location is the nucleus. It localises to the nucleolus. In terms of biological role, required for ribosome biogenesis. Part of a complex which catalyzes pseudouridylation of rRNA. This involves the isomerization of uridine such that the ribose is subsequently attached to C5, instead of the normal N1. Pseudouridine ('psi') residues may serve to stabilize the conformation of rRNAs. This Caenorhabditis briggsae protein is Putative H/ACA ribonucleoprotein complex subunit 2-like protein.